The following is a 402-amino-acid chain: Argininosuccinate synthase (402 aa).

ATP is bound at residue 9-17 (AYSGGLDTS). Residue Y87 participates in L-citrulline binding. G117 lines the ATP pocket. L-aspartate is bound by residues T119, N123, and D124. L-citrulline is bound at residue N123. R127, S176, S185, E261, and Y273 together coordinate L-citrulline.

Belongs to the argininosuccinate synthase family. Type 1 subfamily. In terms of assembly, homotetramer.

It is found in the cytoplasm. The enzyme catalyses L-citrulline + L-aspartate + ATP = 2-(N(omega)-L-arginino)succinate + AMP + diphosphate + H(+). It participates in amino-acid biosynthesis; L-arginine biosynthesis; L-arginine from L-ornithine and carbamoyl phosphate: step 2/3. This chain is Argininosuccinate synthase, found in Chlorobium phaeobacteroides (strain BS1).